The primary structure comprises 92 residues: DNA-directed RNA polymerase subunit omega (92 aa).

This sequence belongs to the RNA polymerase subunit omega family. As to quaternary structure, the RNAP catalytic core consists of 2 alpha, 1 beta, 1 beta' and 1 omega subunit. When a sigma factor is associated with the core the holoenzyme is formed, which can initiate transcription.

It catalyses the reaction RNA(n) + a ribonucleoside 5'-triphosphate = RNA(n+1) + diphosphate. Its function is as follows. Promotes RNA polymerase assembly. Latches the N- and C-terminal regions of the beta' subunit thereby facilitating its interaction with the beta and alpha subunits. This is DNA-directed RNA polymerase subunit omega from Corynebacterium diphtheriae (strain ATCC 700971 / NCTC 13129 / Biotype gravis).